The chain runs to 419 residues: 4-hydroxyphenylpyruvate dioxygenase (419 aa).

2 consecutive VOC domains span residues 37–185 and 216–376; these read GYDH…LLSR and RIDH…LFTR. Fe cation contacts are provided by H219, H302, and E387.

This sequence belongs to the 4HPPD family. The cofactor is Fe cation.

The catalysed reaction is 3-(4-hydroxyphenyl)pyruvate + O2 = homogentisate + CO2. It participates in amino-acid degradation; L-phenylalanine degradation; acetoacetate and fumarate from L-phenylalanine: step 3/6. The protein is 4-hydroxyphenylpyruvate dioxygenase (HPD4) of Pyricularia oryzae (strain 70-15 / ATCC MYA-4617 / FGSC 8958) (Rice blast fungus).